Consider the following 969-residue polypeptide: Surface protein P113 (969 aa).

The N-terminal stretch at 1 to 22 is a signal peptide; it reads MKIPFFILHILLLQFLLCLIRC. An N-linked (GlcNAc...) asparagine glycan is attached at N207. The disordered stretch occupies residues 223–328; the sequence is IGDESTDSSS…TDTLVNNKEN (106 aa). Over residues 229-241 the composition is skewed to polar residues; it reads DSSSMEIQDSTSN. Residue N268 is glycosylated (N-linked (GlcNAc...) asparagine). Basic and acidic residues predominate over residues 300–311; sequence KNEDNKDLEHGS. Residues 312–325 are compositionally biased toward low complexity; it reads SNDVNNNTDTLVNN. N317, N360, N661, and N697 each carry an N-linked (GlcNAc...) asparagine glycan. Residues 688-705 show a composition bias toward polar residues; it reads SSNFNIFDSNNTDQNNEQ. Residues 688–947 are disordered; the sequence is SSNFNIFDSN…NETNKTDNGS (260 aa). Low complexity predominate over residues 713–727; that stretch reads QLLNNNNDDVLSESN. The segment covering 728 to 749 has biased composition (basic and acidic residues); sequence NENKEKTSDDATHKETQEKSDQ. N-linked (GlcNAc...) asparagine glycosylation occurs at N779. Residues 798–811 show a composition bias toward acidic residues; it reads EGTEELQQNDEDAE. Residues 812–822 show a composition bias toward basic and acidic residues; the sequence is SLTKENSKSEE. Over residues 823 to 841 the composition is skewed to acidic residues; the sequence is QENEDSTDAEAIDKEEVET. The segment covering 842-854 has biased composition (basic and acidic residues); the sequence is EEKGKDEQKKDEQ. A compositionally biased stretch (acidic residues) spans 855–864; sequence KEQDEEEDGE. An N-linked (GlcNAc...) asparagine glycan is attached at N876. Over residues 883-896 the composition is skewed to basic and acidic residues; sequence EENKNEVKGEEHLQ. Residues 897–907 show a composition bias toward low complexity; the sequence is GSEQSIEASES. Residues 908–917 show a composition bias toward basic and acidic residues; sequence SQKDETKETE. Residues 918 to 936 show a composition bias toward acidic residues; the sequence is DKEEYVNANDDESSEEDTT. Residues 937 to 947 are compositionally biased toward polar residues; it reads PNETNKTDNGS. 3 N-linked (GlcNAc...) asparagine glycosylation sites follow: N938, N941, and N945. The GPI-anchor amidated asparagine moiety is linked to residue N945. A propeptide spans 946-969 (removed in mature form); that stretch reads GSSFFFAMSNALLVILLLLFIEFL.

As to quaternary structure, forms a complex composed of RH5, P113 and human BSG/basigin; the complex bridges the merozoite and host erythrocyte membranes. Within the complex, interacts with RH5 (via N-terminus); the interaction tethers RH5 to the merozoite membrane.

Its subcellular location is the cell membrane. Functionally, membrane receptor which tethers secreted RH5 to the merozoite membrane during merozoite invasion of host erythocytes. This is Surface protein P113 from Plasmodium falciparum (isolate 3D7).